The sequence spans 923 residues: Transportin-3 (923 aa).

Methionine 1 is subject to N-acetylmethionine. Serine 74 bears the Phosphoserine mark. Phosphothreonine is present on residues histidine 242 and threonine 896.

As to quaternary structure, interacts with (GTP-bound) Ran. Interacts with (phosphorylated) SFRS1 and SFRS2; leading to their nuclear import. Interacts with NUP62. Interacts with RBM4. Interacts with CPSF6, promoting its nuclear import.

The protein localises to the nucleus envelope. The protein resides in the cytoplasm. Its function is as follows. Importin, which transports target proteins into the nucleus. Specifically mediates the nuclear import of splicing factor serine/arginine (SR) proteins, such as RBM4, SFRS1 and SFRS2, by recognizing phosphorylated SR domains. Also mediates the nuclear import of serine/arginine (SR) protein CPSF6, independently of CPSF6 phosphorylation. The nuclear import process is regulated by the small GTPase Ran that partitions between cytoplasm and nucleus in the predominantly GDP- and GTP-bound form, respectively. Importin associates with target cargo proteins in the cytoplasm, and the competitive binding of GTP-bound Ran induces the release of cargos in the nucleus. The sequence is that of Transportin-3 from Mus musculus (Mouse).